A 537-amino-acid chain; its full sequence is Lariat debranching enzyme (537 aa).

The a divalent metal cation site is built by Cys-8, His-10, Asp-39, and Asn-84. Residues 124-154 (SGIYKGHDFLRGHHEFPPYTESTCRSVYHVR) are lariat recognition loop. A divalent metal cation is bound by residues His-174, His-226, and His-228. Disordered regions lie at residues 242 to 272 (KAPT…SRLP) and 473 to 537 (TAAE…EDDD). Low complexity predominate over residues 251–260 (SSSSSSSSSS).

Belongs to the lariat debranching enzyme family. Fe(2+) serves as cofactor. The cofactor is Zn(2+). It depends on Mn(2+) as a cofactor.

Its subcellular location is the nucleus. With respect to regulation, active in presence of diverse metals including Fe(2+), Zn(2+), Mn(2+). Binds two metal cations in two adjacent alpha and beta metal-binding pockets. Functionally, cleaves the 2'-5' phosphodiester linkage at the branch point of lariat intron pre-mRNAs after splicing and converts them into linear molecules that are subsequently degraded. It thereby facilitates ribonucleotide turnover. In Drosophila pseudoobscura pseudoobscura (Fruit fly), this protein is Lariat debranching enzyme (DBR1).